The chain runs to 116 residues: Ribonuclease P protein component (116 aa).

The protein belongs to the RnpA family. As to quaternary structure, consists of a catalytic RNA component (M1 or rnpB) and a protein subunit.

It catalyses the reaction Endonucleolytic cleavage of RNA, removing 5'-extranucleotides from tRNA precursor.. Functionally, RNaseP catalyzes the removal of the 5'-leader sequence from pre-tRNA to produce the mature 5'-terminus. It can also cleave other RNA substrates such as 4.5S RNA. The protein component plays an auxiliary but essential role in vivo by binding to the 5'-leader sequence and broadening the substrate specificity of the ribozyme. This chain is Ribonuclease P protein component, found in Mycobacterium bovis (strain ATCC BAA-935 / AF2122/97).